A 221-amino-acid polypeptide reads, in one-letter code: 7-cyano-7-deazaguanine synthase (221 aa).

Residue 10–20 (FSGGQDSTTCL) coordinates ATP. Residues Cys-186, Cys-195, Cys-198, and Cys-201 each coordinate Zn(2+).

This sequence belongs to the QueC family. As to quaternary structure, homodimer. Zn(2+) serves as cofactor.

It carries out the reaction 7-carboxy-7-deazaguanine + NH4(+) + ATP = 7-cyano-7-deazaguanine + ADP + phosphate + H2O + H(+). The protein operates within purine metabolism; 7-cyano-7-deazaguanine biosynthesis. Functionally, catalyzes the ATP-dependent conversion of 7-carboxy-7-deazaguanine (CDG) to 7-cyano-7-deazaguanine (preQ(0)). The sequence is that of 7-cyano-7-deazaguanine synthase from Anoxybacillus flavithermus (strain DSM 21510 / WK1).